The sequence spans 199 residues: NAD(P)H dehydrogenase (quinone) (199 aa).

One can recognise a Flavodoxin-like domain in the interval 4–190; sequence VLVLYYSSYG…TGARYQGRKI (187 aa). FMN contacts are provided by residues 10–15 and 78–80; these read SSYGHL and TRF. Tyrosine 12 serves as a coordination point for NAD(+). Substrate is bound at residue tryptophan 98. Residues 113–119 and histidine 134 each bind FMN; that span reads STATQHG.

It belongs to the WrbA family. FMN is required as a cofactor.

It carries out the reaction a quinone + NADH + H(+) = a quinol + NAD(+). The enzyme catalyses a quinone + NADPH + H(+) = a quinol + NADP(+). The sequence is that of NAD(P)H dehydrogenase (quinone) from Caulobacter vibrioides (strain ATCC 19089 / CIP 103742 / CB 15) (Caulobacter crescentus).